The sequence spans 120 residues: Acylphosphatase-1 (120 aa).

A2 is modified (N-acetylalanine). Residues 8–98 (SCEFEVFGRV…YGYANFHIKP (91 aa)) form the Acylphosphatase-like domain. Catalysis depends on residues R23 and N41. The segment at 91–120 (YANFHIKPDPHENRPVHEGLGSSSSHHDSN) is disordered. Residues 96 to 107 (IKPDPHENRPVH) show a composition bias toward basic and acidic residues.

The protein belongs to the acylphosphatase family.

The protein localises to the cytoplasm. The enzyme catalyses an acyl phosphate + H2O = a carboxylate + phosphate + H(+). This chain is Acylphosphatase-1 (Acyp), found in Drosophila melanogaster (Fruit fly).